Reading from the N-terminus, the 229-residue chain is Putative N-acetylmannosamine-6-phosphate 2-epimerase (229 aa).

It belongs to the NanE family.

It carries out the reaction an N-acyl-D-glucosamine 6-phosphate = an N-acyl-D-mannosamine 6-phosphate. It participates in amino-sugar metabolism; N-acetylneuraminate degradation; D-fructose 6-phosphate from N-acetylneuraminate: step 3/5. Converts N-acetylmannosamine-6-phosphate (ManNAc-6-P) to N-acetylglucosamine-6-phosphate (GlcNAc-6-P). The polypeptide is Putative N-acetylmannosamine-6-phosphate 2-epimerase (Shigella flexneri serotype 5b (strain 8401)).